The primary structure comprises 551 residues: Serendipity locus protein alpha (551 aa).

It is found in the cytoplasm. The protein localises to the cell membrane. Required for the cellularization of the syncytial blastoderm embryo. Involved in the localization of the actin filaments just prior to and during plasma membrane invagination. Sry-alpha together with nullo and bnk may provide auxiliary functions, by acting both to stabilize a large and dynamic microfilament structure and regulate its functions. This is Serendipity locus protein alpha (Sry-alpha) from Drosophila pseudoobscura pseudoobscura (Fruit fly).